The primary structure comprises 337 residues: 1-aminocyclopropane-1-carboxylate deaminase (337 aa).

The residue at position 50 (Lys50) is an N6-(pyridoxal phosphate)lysine.

The protein belongs to the ACC deaminase/D-cysteine desulfhydrase family. Homotrimer. Pyridoxal 5'-phosphate is required as a cofactor.

The enzyme catalyses 1-aminocyclopropane-1-carboxylate + H2O = 2-oxobutanoate + NH4(+). Catalyzes a cyclopropane ring-opening reaction, the irreversible conversion of 1-aminocyclopropane-1-carboxylate (ACC) to ammonia and alpha-ketobutyrate. Allows growth on ACC as a nitrogen source. This is 1-aminocyclopropane-1-carboxylate deaminase from Mesorhizobium japonicum (strain LMG 29417 / CECT 9101 / MAFF 303099) (Mesorhizobium loti (strain MAFF 303099)).